A 464-amino-acid polypeptide reads, in one-letter code: Argininosuccinate lyase (464 aa).

Belongs to the lyase 1 family. Argininosuccinate lyase subfamily.

It is found in the cytoplasm. The enzyme catalyses 2-(N(omega)-L-arginino)succinate = fumarate + L-arginine. Its pathway is amino-acid biosynthesis; L-arginine biosynthesis; L-arginine from L-ornithine and carbamoyl phosphate: step 3/3. The protein is Argininosuccinate lyase of Koribacter versatilis (strain Ellin345).